Consider the following 229-residue polypeptide: MPKKKAFTPLPYLASIVFLPWWISLSFNKSLESWITNWWNTRQSEIFLNDIQEKNVLEKFIELEELFLLDEMIKEYPETHIQKLRIGIHKETIELVKIHNEGHIHTILHFSTNITCFAILSGYSILGNEELVILNSWLQEFLYNLSDTIKAFSILLLTDLCIGFHSPHGWELMISSVYRDFGFAHNDPIISGLVSTFPVILDTIFKYWIFRYLNRVSPSLVVIYHSMND.

4 helical membrane passes run phenylalanine 7–phenylalanine 27, isoleucine 114–leucine 134, isoleucine 154–isoleucine 174, and isoleucine 189–isoleucine 209.

This sequence belongs to the CemA family.

It is found in the plastid. The protein localises to the chloroplast inner membrane. The enzyme catalyses K(+)(in) + H(+)(out) = K(+)(out) + H(+)(in). Its function is as follows. Contributes to K(+)/H(+) antiport activity by supporting proton efflux to control proton extrusion and homeostasis in chloroplasts in a light-dependent manner to modulate photosynthesis. Prevents excessive induction of non-photochemical quenching (NPQ) under continuous-light conditions. Indirectly promotes efficient inorganic carbon uptake into chloroplasts. The sequence is that of Potassium/proton antiporter CemA from Platanus occidentalis (Sycamore).